The chain runs to 355 residues: Aromatic amino acid aminotransferase (355 aa).

Residue lysine 217 is modified to N6-(pyridoxal phosphate)lysine.

It belongs to the class-II pyridoxal-phosphate-dependent aminotransferase family. As to quaternary structure, homodimer. The cofactor is pyridoxal 5'-phosphate.

It carries out the reaction an aromatic L-alpha-amino acid + 2-oxoglutarate = an aromatic oxo-acid + L-glutamate. Aminotransferase that catalyzes the conversion of aromatic amino acids and 2-oxoglutarate into corresponding aromatic oxo acids and L-glutamate. This is Aromatic amino acid aminotransferase from Mycolicibacterium paratuberculosis (strain ATCC BAA-968 / K-10) (Mycobacterium paratuberculosis).